The primary structure comprises 406 residues: Argininosuccinate synthase (406 aa).

Residues 13-21 (AYSGGLDTS) and A40 each bind ATP. Y91 and S96 together coordinate L-citrulline. G121 is an ATP binding site. The L-aspartate site is built by T123, N127, and D128. N127 serves as a coordination point for L-citrulline. Positions 131, 180, 189, 265, and 277 each coordinate L-citrulline.

Belongs to the argininosuccinate synthase family. Type 1 subfamily. In terms of assembly, homotetramer.

Its subcellular location is the cytoplasm. The catalysed reaction is L-citrulline + L-aspartate + ATP = 2-(N(omega)-L-arginino)succinate + AMP + diphosphate + H(+). It participates in amino-acid biosynthesis; L-arginine biosynthesis; L-arginine from L-ornithine and carbamoyl phosphate: step 2/3. The polypeptide is Argininosuccinate synthase (Syntrophotalea carbinolica (strain DSM 2380 / NBRC 103641 / GraBd1) (Pelobacter carbinolicus)).